The sequence spans 563 residues: MKKFNIIAAINNDSIIGVKEYGTFSMPWPYLKDDMNHFRKITTDTGSIESGVNAIIVGFNTWQTLPSSYRNIRSRFNIVISRDDETDGQFHKYVKTFDEAIEFASSLTNLNEIFVIGGGVIYDLALKHKLLDKLYLTHVGSNYPIDDNVEKVVHFPLTWSKIEKMCDSNFLELDSEISKHDIGKNILLRFQEYSVKKELYWAIEYLKKNTSLDNKGIIGDKGATGSKGYSLEQHDYYSTEYFWNFYEFITRKVFDLFNSSNEISIPSEECPENQYIELVKTIMEKGIVKQTRNSITKSIFGYQLKYDLSKGYPIQTIKRSYPKAIFEELMWMIRGQTDVSILQKKGVHVWDKNSSKDFLSKYNLPYEEGDIGPGYGFQMRYWGAEYTDCKTSYQGQGIDQLNKCIESIQNNPHDRRIMINLWNCSDLDKMALAPCHFCYMFGVDLYEVPTTSGKKGRLNCHLVQRSWDVLLGWNTTTAALLTYLIANHCDLDPGILVHSISDAHIYQSHIDSGAISQLLQRKCRKFPNLVIRNKKEKIDDYEFDDLIIENYYPCPSISAEMIA.

The region spanning 3 to 195 is the DHFR domain; sequence KFNIIAAINN…ILLRFQEYSV (193 aa). 117–124 is an NADP(+) binding site; the sequence is GGGVIYDL. The thymidylate synthase stretch occupies residues 275–563; the sequence is YIELVKTIME…CPSISAEMIA (289 aa). Arg-292 lines the dUMP pocket. Cys-435 is a catalytic residue. Residues His-436, 464–468, Asn-474, and 504–506 contribute to the dUMP site; these read QRSWD and HIY.

This sequence in the N-terminal section; belongs to the dihydrofolate reductase family. The protein in the C-terminal section; belongs to the thymidylate synthase family.

It carries out the reaction (6S)-5,6,7,8-tetrahydrofolate + NADP(+) = 7,8-dihydrofolate + NADPH + H(+). The enzyme catalyses dUMP + (6R)-5,10-methylene-5,6,7,8-tetrahydrofolate = 7,8-dihydrofolate + dTMP. The protein operates within cofactor biosynthesis; tetrahydrofolate biosynthesis; 5,6,7,8-tetrahydrofolate from 7,8-dihydrofolate: step 1/1. Its function is as follows. Bifunctional enzyme. Involved in de novo dTMP biosynthesis. Key enzyme in folate metabolism. Catalyzes an essential reaction for de novo glycine and purine synthesis, DNA precursor synthesis, and for the conversion of dUMP to dTMP. This chain is Bifunctional dihydrofolate reductase-thymidylate synthase, found in Acanthamoeba polyphaga mimivirus (APMV).